The following is an 879-amino-acid chain: Fanconi anemia core complex-associated protein 100 (879 aa).

Belongs to the multisubunit FA complex composed of FANCA, FANCB, FANCC, FANCE, FANCF, FANCG, FANCL/PHF9, FANCM, FAAP24 and FAAP100. Forms a subcomplex with FANCB and FANCL.

It is found in the nucleus. Functionally, plays a role in Fanconi anemia-associated DNA damage response network. Regulates FANCD2 monoubiquitination and the stability of the FA core complex. Induces chromosomal instability as well as hypersensitivity to DNA cross-linking agents, when repressed. The chain is Fanconi anemia core complex-associated protein 100 from Mus musculus (Mouse).